Consider the following 195-residue polypeptide: Cysteine/O-acetylserine efflux protein (195 aa).

A run of 5 helical transmembrane segments spans residues 47-67 (SLGF…LAVI), 70-90 (AAVH…AWKI), 105-125 (ISFW…LYGV), 142-162 (VVGV…CWAL), and 177-194 (QLNI…VRIF).

It belongs to the Rht family.

It is found in the cell inner membrane. It carries out the reaction O-acetyl-L-serine(in) = O-acetyl-L-serine(out). The catalysed reaction is L-cysteine(in) = L-cysteine(out). Exporter of O-acetylserine (OAS) and cysteine. This Shigella boydii serotype 4 (strain Sb227) protein is Cysteine/O-acetylserine efflux protein (eamB).